A 1093-amino-acid polypeptide reads, in one-letter code: Probable phosphorylase b kinase regulatory subunit beta (1093 aa).

The interval 1–27 (MRDVPKSLGLSVTTPGGSSGAPDSGRH) is disordered. 3 calmodulin-binding regions span residues 6–27 (KSLG…SGRH), 751–778 (QLYH…IVDS), and 905–936 (EKLT…ILQR). Cysteine 1090 is lipidated: S-farnesyl cysteine.

The protein belongs to the phosphorylase b kinase regulatory chain family. Post-translationally, although the final Cys may be farnesylated, the terminal tripeptide is probably not removed, and the C-terminus is not methylated.

The protein localises to the cell membrane. Its pathway is glycan biosynthesis; glycogen metabolism. Phosphorylase b kinase catalyzes the phosphorylation of serine in certain substrates, including troponin I. The beta chain acts as a regulatory unit and modulates the activity of the holoenzyme in response to phosphorylation. This is Probable phosphorylase b kinase regulatory subunit beta from Drosophila melanogaster (Fruit fly).